A 738-amino-acid chain; its full sequence is Polyribonucleotide nucleotidyltransferase (738 aa).

Residues Asp-528 and Asp-534 each coordinate Mg(2+). In terms of domain architecture, KH spans 594–653; sequence PRVVRVKIPVQKIGELIGPKGKVINSIQDETGAEISIEDDGTVYIGSSQADSSEKAVAMV. The region spanning 665–737 is the S1 motif domain; it reads GSQFLGTVVK…DRGKLCLVAV (73 aa).

This sequence belongs to the polyribonucleotide nucleotidyltransferase family. It depends on Mg(2+) as a cofactor.

It localises to the cytoplasm. It carries out the reaction RNA(n+1) + phosphate = RNA(n) + a ribonucleoside 5'-diphosphate. Functionally, involved in mRNA degradation. Catalyzes the phosphorolysis of single-stranded polyribonucleotides processively in the 3'- to 5'-direction. This chain is Polyribonucleotide nucleotidyltransferase, found in Tropheryma whipplei (strain Twist) (Whipple's bacillus).